We begin with the raw amino-acid sequence, 562 residues long: Potassium-transporting ATPase potassium-binding subunit (562 aa).

The next 12 membrane-spanning stretches (helical) occupy residues Phe6–Phe26, Tyr62–Met82, Gly132–Ile152, Val170–Val190, Phe253–Val273, Leu283–Leu303, Phe327–Val347, Ala356–Val376, Gly379–Gly399, Met416–Ile436, Leu483–Ile503, and Leu526–Ala546.

It belongs to the KdpA family. The system is composed of three essential subunits: KdpA, KdpB and KdpC.

Its subcellular location is the cell inner membrane. Functionally, part of the high-affinity ATP-driven potassium transport (or Kdp) system, which catalyzes the hydrolysis of ATP coupled with the electrogenic transport of potassium into the cytoplasm. This subunit binds the periplasmic potassium ions and delivers the ions to the membrane domain of KdpB through an intramembrane tunnel. The sequence is that of Potassium-transporting ATPase potassium-binding subunit from Serratia proteamaculans (strain 568).